A 606-amino-acid polypeptide reads, in one-letter code: NADH-ubiquinone oxidoreductase chain 5 (606 aa).

16 consecutive transmembrane segments (helical) span residues 1–21, 43–63, 88–108, 117–137, 140–160, 171–191, 209–229, 241–261, 273–293, 310–330, 366–386, 413–433, 457–477, 488–508, 513–533, and 582–602; these read MNLF…PIIM, AFII…EAII, IFIP…MWYM, FFKY…ANNL, LFIG…WWYG, AILY…WFLT, LNIP…QFGL, TPVS…FLLI, MQTL…ICAL, LGLM…LHIC, MPFT…MPFL, LIAT…VLLG, LLIG…PTTI, LTAL…NLAA, FMYP…PIVM, and GLVK…LILL.

This sequence belongs to the complex I subunit 5 family. As to quaternary structure, core subunit of respiratory chain NADH dehydrogenase (Complex I) which is composed of 45 different subunits.

It localises to the mitochondrion inner membrane. It catalyses the reaction a ubiquinone + NADH + 5 H(+)(in) = a ubiquinol + NAD(+) + 4 H(+)(out). Core subunit of the mitochondrial membrane respiratory chain NADH dehydrogenase (Complex I) which catalyzes electron transfer from NADH through the respiratory chain, using ubiquinone as an electron acceptor. Essential for the catalytic activity and assembly of complex I. The polypeptide is NADH-ubiquinone oxidoreductase chain 5 (MT-ND5) (Felis catus (Cat)).